We begin with the raw amino-acid sequence, 144 residues long: uncharacterized protein (144 aa).

2 consecutive transmembrane segments (helical) span residues 10-30 and 60-80; these read ILTR…GLGP and YVFL…AIAV.

Its subcellular location is the membrane. This is an uncharacterized protein from Saccharomyces cerevisiae (strain ATCC 204508 / S288c) (Baker's yeast).